We begin with the raw amino-acid sequence, 197 residues long: dTTP/UTP pyrophosphatase (197 aa).

Asp70 serves as the catalytic Proton acceptor.

This sequence belongs to the Maf family. YhdE subfamily. The cofactor is a divalent metal cation.

It is found in the cytoplasm. The catalysed reaction is dTTP + H2O = dTMP + diphosphate + H(+). It catalyses the reaction UTP + H2O = UMP + diphosphate + H(+). Functionally, nucleoside triphosphate pyrophosphatase that hydrolyzes dTTP and UTP. May have a dual role in cell division arrest and in preventing the incorporation of modified nucleotides into cellular nucleic acids. The polypeptide is dTTP/UTP pyrophosphatase (Pectobacterium atrosepticum (strain SCRI 1043 / ATCC BAA-672) (Erwinia carotovora subsp. atroseptica)).